Consider the following 513-residue polypeptide: Aspartyl protease family protein 1 (513 aa).

The signal sequence occupies residues 1–21 (MVWYSSCRILFLGLLILLASS). Residues 104–445 (HYANVTVGTP…DREKLILGWK (342 aa)) form the Peptidase A1 domain. Catalysis depends on residues aspartate 122 and aspartate 327. The segment at 452-488 (GETSARTLPSNRSSSSARPPASSFDPEATNIPSQRPN) is disordered. A compositionally biased stretch (low complexity) spans 455-474 (SARTLPSNRSSSSARPPASS). Serine 484 is lipidated: GPI-anchor amidated serine. The propeptide at 485-513 (QRPNTSTTSAAYSLSISLSLFFFSILAIL) is removed in mature form.

The protein belongs to the peptidase A1 family.

The protein localises to the cell membrane. Aspartyl protease. Not able to cleave BAG6. The protein is Aspartyl protease family protein 1 of Arabidopsis thaliana (Mouse-ear cress).